A 319-amino-acid chain; its full sequence is ATP-dependent 6-phosphofructokinase (319 aa).

G11 serves as a coordination point for ATP. Residue 21 to 25 (RAVVR) coordinates ADP. ATP contacts are provided by residues 72-73 (RC) and 102-105 (GDGS). Mg(2+) is bound at residue D103. 125–127 (TID) lines the substrate pocket. The active-site Proton acceptor is D127. R154 contacts ADP. Substrate-binding positions include R162 and 169–171 (MGR). Residues 185-187 (GAE), R211, and 213-215 (KKH) contribute to the ADP site. Residues E222, R243, and 249–252 (HVQR) each bind substrate.

The protein belongs to the phosphofructokinase type A (PFKA) family. ATP-dependent PFK group I subfamily. Prokaryotic clade 'B1' sub-subfamily. In terms of assembly, homotetramer. Mg(2+) serves as cofactor.

The protein resides in the cytoplasm. It carries out the reaction beta-D-fructose 6-phosphate + ATP = beta-D-fructose 1,6-bisphosphate + ADP + H(+). The protein operates within carbohydrate degradation; glycolysis; D-glyceraldehyde 3-phosphate and glycerone phosphate from D-glucose: step 3/4. Its activity is regulated as follows. Allosterically activated by ADP and other diphosphonucleosides, and allosterically inhibited by phosphoenolpyruvate. In terms of biological role, catalyzes the phosphorylation of D-fructose 6-phosphate to fructose 1,6-bisphosphate by ATP, the first committing step of glycolysis. This Bacillus anthracis (strain A0248) protein is ATP-dependent 6-phosphofructokinase.